A 463-amino-acid polypeptide reads, in one-letter code: tRNA-2-methylthio-N(6)-dimethylallyladenosine synthase (463 aa).

An MTTase N-terminal domain is found at 18 to 136 (RKLYIETYGC…LPNLVGAAEQ (119 aa)). The [4Fe-4S] cluster site is built by C27, C63, C100, C174, C178, and C181. The 233-residue stretch at 160–392 (GGVHINGFVS…IALQNRLSEE (233 aa)) folds into the Radical SAM core domain. The region spanning 395–458 (KRDIGKTFEV…SATLFGEVVE (64 aa)) is the TRAM domain.

It belongs to the methylthiotransferase family. MiaB subfamily. Monomer. [4Fe-4S] cluster serves as cofactor.

Its subcellular location is the cytoplasm. It carries out the reaction N(6)-dimethylallyladenosine(37) in tRNA + (sulfur carrier)-SH + AH2 + 2 S-adenosyl-L-methionine = 2-methylsulfanyl-N(6)-dimethylallyladenosine(37) in tRNA + (sulfur carrier)-H + 5'-deoxyadenosine + L-methionine + A + S-adenosyl-L-homocysteine + 2 H(+). In terms of biological role, catalyzes the methylthiolation of N6-(dimethylallyl)adenosine (i(6)A), leading to the formation of 2-methylthio-N6-(dimethylallyl)adenosine (ms(2)i(6)A) at position 37 in tRNAs that read codons beginning with uridine. This chain is tRNA-2-methylthio-N(6)-dimethylallyladenosine synthase, found in Porphyromonas gingivalis (strain ATCC BAA-308 / W83).